The following is a 170-amino-acid chain: MAVSKQVIATEAITRKVDLDNPKVVAKLKKNMGHMTYGEPAWPNDLLFMFPVVILGTIGVIVGLSVMDPAGVGEPADPFATPLEILPEWYLYPAFHILRIAPNKLLGIALMSAIPVGLLFVPFIENVNKFQNPLRRPVATTVFLIGTLVTLYLGIGATLPLDKWVTLGLF.

Transmembrane regions (helical) follow at residues 46–66, 105–125, and 141–161; these read LLFM…GLSV, LLGI…PFIE, and TVFL…TLPL.

This sequence belongs to the cytochrome b family. PetD subfamily. In terms of assembly, the 4 large subunits of the cytochrome b6-f complex are cytochrome b6, subunit IV (17 kDa polypeptide, PetD), cytochrome f and the Rieske protein, while the 4 small subunits are PetG, PetL, PetM and PetN. The complex functions as a dimer.

Its subcellular location is the cellular thylakoid membrane. Component of the cytochrome b6-f complex, which mediates electron transfer between photosystem II (PSII) and photosystem I (PSI), cyclic electron flow around PSI, and state transitions. The protein is Cytochrome b6-f complex subunit 4 of Synechococcus sp. (strain JA-2-3B'a(2-13)) (Cyanobacteria bacterium Yellowstone B-Prime).